Consider the following 936-residue polypeptide: Phosphoenolpyruvate carboxylase (936 aa).

Active-site residues include His155 and Lys595.

It belongs to the PEPCase type 1 family. As to quaternary structure, homotetramer. Mg(2+) serves as cofactor. Mn(2+) is required as a cofactor.

It catalyses the reaction oxaloacetate + phosphate = phosphoenolpyruvate + hydrogencarbonate. Its activity is regulated as follows. Exhibits positive allosteric property with acetyl-CoA and fructose 1,6-bisphosphate, and a negative one with L-aspartate and L-malate. In terms of biological role, forms oxaloacetate, a four-carbon dicarboxylic acid source for the tricarboxylic acid cycle. The protein is Phosphoenolpyruvate carboxylase (ppc) of Rhodothermus marinus (Rhodothermus obamensis).